A 181-amino-acid polypeptide reads, in one-letter code: Protein AC41 (181 aa).

Its function is as follows. Plays a role in late gene expression. The polypeptide is Protein AC41 (AC41) (Autographa californica nuclear polyhedrosis virus (AcMNPV)).